We begin with the raw amino-acid sequence, 430 residues long: MKTTINQVYKHTGEEVMIGAWVANKRSSGKIAFLQLRDGTGFIQGVVVKAEVEEDIFQIAKSVTQETSLYVKGIVKEDERSPLGYELAVTSIEVIHEATDYPITPKEHGTEFLMDHRHLWLRSKRQHAIMKIRNEIIRATYEFFNKEGFVKVDPPILTGSAPEGTTELFATKYFDEDAFLSQSGQLYMEAAAMALGKVFSFGPTFRAEKSKTKRHLIEFWMIEPEMAFVEFEENLEVQENYVAYIVQSVLEHCKIELNTLGRDTSKLEQIKAPFPRITYDKAIEFLKEKGFDDIEWGDDFGAPHETAIAESYDKPVFITHYPTSLKPFYMQPAKDRDDVVLCADLIAPEGYGEIIGGSERVHDMDLLEERLKEHGLDSDAYKWYAELRQYGSVPHSGFGLGLERTVAWISGAPHVRETIPFPRLLNRLYP.

It belongs to the class-II aminoacyl-tRNA synthetase family. Homodimer.

The protein resides in the cytoplasm. The enzyme catalyses tRNA(Asn) + L-asparagine + ATP = L-asparaginyl-tRNA(Asn) + AMP + diphosphate + H(+). The chain is Asparagine--tRNA ligase from Bacillus velezensis (strain DSM 23117 / BGSC 10A6 / LMG 26770 / FZB42) (Bacillus amyloliquefaciens subsp. plantarum).